The following is a 201-amino-acid chain: 3-isopropylmalate dehydratase small subunit (201 aa).

It belongs to the LeuD family. LeuD type 1 subfamily. As to quaternary structure, heterodimer of LeuC and LeuD.

It catalyses the reaction (2R,3S)-3-isopropylmalate = (2S)-2-isopropylmalate. It functions in the pathway amino-acid biosynthesis; L-leucine biosynthesis; L-leucine from 3-methyl-2-oxobutanoate: step 2/4. In terms of biological role, catalyzes the isomerization between 2-isopropylmalate and 3-isopropylmalate, via the formation of 2-isopropylmaleate. This Jannaschia sp. (strain CCS1) protein is 3-isopropylmalate dehydratase small subunit.